The following is a 324-amino-acid chain: MASEALHQVGDGEEAVLKKENFNMMNALDQLPKPFSNPKSMNRTVTTKGLPLASKGNLVNFLEDDTINLLKPLPVEDSDCSSDETSISAFSSTLLNPIKLAVTQPNSSFFAGMLEGELNKLSFSPMAKNAENEDLALGPCPCPSKSQMATRGLLDLDNPELETETSSTHSESSVVVDLPDTPFIFEHTVNNSTAVISWTYALGKQPVSFYQLLLQEVAKTQENELPEAKNRPWIFNKILGTTVKLMELKPNTCYCLSVRAANTAGVGKWCKPYKFATLATDFSSFPENYPIQITVRRKEPRQKIVSIGPEEMRRLEDLEYLFPC.

In terms of domain architecture, Fibronectin type-III spans 179–280 (PDTPFIFEHT…KPYKFATLAT (102 aa)).

In Homo sapiens (Human), this protein is Fibronectin type III domain-containing protein 8 (FNDC8).